The primary structure comprises 391 residues: G-patch domain-containing protein 1 (391 aa).

The G-patch domain occupies 15 to 61; sequence KDSAAFKLMKSMGWEEGEGLGKDKQGIKGYVRVTNKQDTSGVGLDKP. 2 disordered regions span residues 80 to 132 and 212 to 307; these read VQAA…EKGK and KASE…PAKR. Acidic residues-rich tracts occupy residues 92-102 and 265-295; these read DDSDKEDESED and NSDD…DDDK. The Nuclear localization signal signature appears at 305–312; it reads AKRKHDEI.

Strongly expressed in tissues with high cell proliferation activity that have a high demand for ribosome production such as shoot tips, leaves primordia, root tips and floral buds.

Its subcellular location is the nucleus. It is found in the nucleolus. In terms of biological role, involved in ribosome biogenesis, required for normal progression of rRNA processing. Seems to promote cell proliferation in leaves. The chain is G-patch domain-containing protein 1 from Arabidopsis thaliana (Mouse-ear cress).